Here is a 179-residue protein sequence, read N- to C-terminus: Acireductone dioxygenase (179 aa).

Residues 1 to 12 are compositionally biased toward acidic residues; that stretch reads MVEAWYMDDSEE. The segment at 1–21 is disordered; that stretch reads MVEAWYMDDSEEDQRRPHRLE. 4 residues coordinate Fe(2+): histidine 88, histidine 90, glutamate 94, and histidine 133. Histidine 88, histidine 90, glutamate 94, and histidine 133 together coordinate Ni(2+).

Belongs to the acireductone dioxygenase (ARD) family. In terms of assembly, monomer. Interacts with MMP14. Fe(2+) serves as cofactor. Requires Ni(2+) as cofactor.

Its subcellular location is the cytoplasm. It localises to the nucleus. The protein localises to the cell membrane. It catalyses the reaction 1,2-dihydroxy-5-(methylsulfanyl)pent-1-en-3-one + O2 = 4-methylsulfanyl-2-oxobutanoate + formate + 2 H(+). The catalysed reaction is 1,2-dihydroxy-5-(methylsulfanyl)pent-1-en-3-one + O2 = 3-(methylsulfanyl)propanoate + CO + formate + 2 H(+). The protein operates within amino-acid biosynthesis; L-methionine biosynthesis via salvage pathway; L-methionine from S-methyl-5-thio-alpha-D-ribose 1-phosphate: step 5/6. Functionally, catalyzes 2 different reactions between oxygen and the acireductone 1,2-dihydroxy-3-keto-5-methylthiopentene (DHK-MTPene) depending upon the metal bound in the active site. Fe-containing acireductone dioxygenase (Fe-ARD) produces formate and 2-keto-4-methylthiobutyrate (KMTB), the alpha-ketoacid precursor of methionine in the methionine recycle pathway. Ni-containing acireductone dioxygenase (Ni-ARD) produces methylthiopropionate, carbon monoxide and formate, and does not lie on the methionine recycle pathway. Also down-regulates cell migration mediated by MMP14. In Monodelphis domestica (Gray short-tailed opossum), this protein is Acireductone dioxygenase.